Consider the following 96-residue polypeptide: UPF0235 protein SO_3356 (96 aa).

The protein belongs to the UPF0235 family.

This is UPF0235 protein SO_3356 from Shewanella oneidensis (strain ATCC 700550 / JCM 31522 / CIP 106686 / LMG 19005 / NCIMB 14063 / MR-1).